Consider the following 388-residue polypeptide: F-box protein At5g42460 (388 aa).

An F-box domain is found at 1–47; sequence MTIMSDLPRDLLAEILSRVPLTSLRAVRLTCKKWNDLSKDRSFLKKQ.

The chain is F-box protein At5g42460 from Arabidopsis thaliana (Mouse-ear cress).